The primary structure comprises 1030 residues: Leucine-rich repeat and coiled-coil domain-containing protein 1 (1030 aa).

LRR repeat units follow at residues 7–28 (RNRE…CLNS), 29–50 (NLYS…RHLC), 51–72 (YLQH…DSLA), 73–94 (SLQS…EKLF), 95–116 (NLKK…IPLH), and 121–142 (KLSH…LQST). The LRRCT domain maps to 160 to 200 (NPVCHALGYREIILENLPQLNSLDGLDRSGDPVTAHEVDSM). Residues 298 to 401 (KSEQTKLKAK…GQILGKPHAI (104 aa)) form a disordered region. Over residues 300–311 (EQTKLKAKRDTD) the composition is skewed to basic and acidic residues. Polar residues-rich tracts occupy residues 338–368 (KTSQ…SRKQ) and 378–393 (ETSL…STGQ). Residues 432–645 (RERRWKAEQV…DLEDEFRAAL (214 aa)) are a coiled coil.

The protein belongs to the LRRCC1 family.

It is found in the cytoplasm. The protein localises to the cytoskeleton. The protein resides in the microtubule organizing center. Its subcellular location is the centrosome. It localises to the centriole. Functionally, required for the organization of the mitotic spindle. Maintains the structural integrity of centrosomes during mitosis. In Xenopus laevis (African clawed frog), this protein is Leucine-rich repeat and coiled-coil domain-containing protein 1 (lrrcc1).